The primary structure comprises 44 residues: Protein PsbN (44 aa).

Residues 6–26 (FFFTFFLWFLLLSATGYSIYV) form a helical membrane-spanning segment.

It belongs to the PsbN family.

It is found in the plastid. The protein localises to the chloroplast thylakoid membrane. Its function is as follows. May play a role in photosystem I and II biogenesis. The protein is Protein PsbN of Tetradesmus obliquus (Green alga).